Reading from the N-terminus, the 297-residue chain is Protoheme IX farnesyltransferase 1 (297 aa).

9 consecutive transmembrane segments (helical) span residues 23–43 (VVVL…RAGV), 45–65 (WSVL…AAVV), 93–113 (LPAL…LLAF), 117–137 (LTAW…TGFL), 145–165 (IVIG…AVSG), 171–191 (PLLL…ALAI), 216–236 (LHIL…YAIH), 241–261 (LYLA…WVLY), and 277–297 (IAYL…LLNL).

Belongs to the UbiA prenyltransferase family. Protoheme IX farnesyltransferase subfamily.

Its subcellular location is the cell inner membrane. The enzyme catalyses heme b + (2E,6E)-farnesyl diphosphate + H2O = Fe(II)-heme o + diphosphate. The protein operates within porphyrin-containing compound metabolism; heme O biosynthesis; heme O from protoheme: step 1/1. Converts heme B (protoheme IX) to heme O by substitution of the vinyl group on carbon 2 of heme B porphyrin ring with a hydroxyethyl farnesyl side group. The protein is Protoheme IX farnesyltransferase 1 of Pseudomonas putida (strain GB-1).